Reading from the N-terminus, the 265-residue chain is Dehydrin COR47 (265 aa).

The span at 1–14 (MAEEYKNNVPEHET) shows a compositional bias: basic and acidic residues. A disordered region spans residues 1 to 265 (MAEEYKNNVP…EVKKEKESDD (265 aa)). Alanine 2 is modified (N-acetylalanine). Over residues 16-28 (TVATEESPATTTE) the composition is skewed to polar residues. Basic and acidic residues predominate over residues 29-47 (VTDRGLFDFLGKKEEEVKP). Serine 64 is subject to Phosphoserine. The segment covering 69 to 79 (AAEHEEVKENK) has biased composition (basic and acidic residues). A Phosphothreonine modification is found at threonine 90. 2 stretches are compositionally biased toward basic and acidic residues: residues 96–105 (NKPSVIEKLH) and 129–156 (IVEGEEDKKGLVEKIKEKLPGHHDKTAE). Repeat unit 1 spans residues 133–153 (EEDKKGLVEKIKEKLPGHHDK). A 3 X 21 AA repeats, Lys-rich region spans residues 133-251 (EEDKKGLVEK…KEKLPGYHAK (119 aa)). The span at 160 to 172 (PVSTTIPVPVSES) shows a compositional bias: low complexity. Composition is skewed to basic and acidic residues over residues 173–204 (VVEHDHPEEEKKGLVEKIKEKLPGHHDEKAED) and 227–265 (PVEHPEEKKGILEKIKEKLPGYHAKTTEEEVKKEKESDD). 2 repeat units span residues 180 to 200 (EEEKKGLVEKIKEKLPGHHDE) and 231 to 251 (PEEKKGILEKIKEKLPGYHAK).

This sequence belongs to the plant dehydrin family.

This chain is Dehydrin COR47 (COR47), found in Arabidopsis thaliana (Mouse-ear cress).